We begin with the raw amino-acid sequence, 74 residues long: Ubiquitin-like protein FUBI (74 aa).

The protein belongs to the ubiquitin family.

The polypeptide is Ubiquitin-like protein FUBI (FAU) (Bos taurus (Bovine)).